The chain runs to 132 residues: ATP synthase epsilon chain (132 aa).

The protein belongs to the ATPase epsilon chain family. As to quaternary structure, F-type ATPases have 2 components, CF(1) - the catalytic core - and CF(0) - the membrane proton channel. CF(1) has five subunits: alpha(3), beta(3), gamma(1), delta(1), epsilon(1). CF(0) has three main subunits: a, b and c.

The protein localises to the cell inner membrane. Its function is as follows. Produces ATP from ADP in the presence of a proton gradient across the membrane. This chain is ATP synthase epsilon chain, found in Parvibaculum lavamentivorans (strain DS-1 / DSM 13023 / NCIMB 13966).